Consider the following 242-residue polypeptide: Biosynthetic peptidoglycan transglycosylase (242 aa).

Residues 21-41 (VALVVFWGGGIALFSVVPVPF) traverse the membrane as a helical segment.

Belongs to the glycosyltransferase 51 family.

The protein resides in the cell inner membrane. The catalysed reaction is [GlcNAc-(1-&gt;4)-Mur2Ac(oyl-L-Ala-gamma-D-Glu-L-Lys-D-Ala-D-Ala)](n)-di-trans,octa-cis-undecaprenyl diphosphate + beta-D-GlcNAc-(1-&gt;4)-Mur2Ac(oyl-L-Ala-gamma-D-Glu-L-Lys-D-Ala-D-Ala)-di-trans,octa-cis-undecaprenyl diphosphate = [GlcNAc-(1-&gt;4)-Mur2Ac(oyl-L-Ala-gamma-D-Glu-L-Lys-D-Ala-D-Ala)](n+1)-di-trans,octa-cis-undecaprenyl diphosphate + di-trans,octa-cis-undecaprenyl diphosphate + H(+). It participates in cell wall biogenesis; peptidoglycan biosynthesis. Its function is as follows. Peptidoglycan polymerase that catalyzes glycan chain elongation from lipid-linked precursors. This Salmonella arizonae (strain ATCC BAA-731 / CDC346-86 / RSK2980) protein is Biosynthetic peptidoglycan transglycosylase.